We begin with the raw amino-acid sequence, 155 residues long: Peptidyl-prolyl cis-trans isomerase ppi1 (155 aa).

The PPIase cyclophilin-type domain maps to 1–154; the sequence is MANVELQTSL…EPLKIIKAVA (154 aa).

It belongs to the cyclophilin-type PPIase family. PPIL1 subfamily. In terms of assembly, interacts with cwf13/snw1.

It carries out the reaction [protein]-peptidylproline (omega=180) = [protein]-peptidylproline (omega=0). PPIases accelerate the folding of proteins. It catalyzes the cis-trans isomerization of proline imidic peptide bonds in oligopeptides. The sequence is that of Peptidyl-prolyl cis-trans isomerase ppi1 (ppi1) from Schizosaccharomyces pombe (strain 972 / ATCC 24843) (Fission yeast).